The primary structure comprises 212 residues: Probable GTP-binding protein EngB (212 aa).

Residues 40–212 enclose the EngB-type G domain; sequence SLPEIAFVGK…KASLAKCIKA (173 aa). Residues 48-55, 75-79, 93-96, 160-163, and 191-193 contribute to the GTP site; these read GKSNVGKS, GRTRQ, DLPG, TKSD, and VSS. Residues Ser55 and Thr77 each contribute to the Mg(2+) site.

Belongs to the TRAFAC class TrmE-Era-EngA-EngB-Septin-like GTPase superfamily. EngB GTPase family. The cofactor is Mg(2+).

Functionally, necessary for normal cell division and for the maintenance of normal septation. The protein is Probable GTP-binding protein EngB of Rickettsia akari (strain Hartford).